Reading from the N-terminus, the 102-residue chain is Vacuolar ATPase assembly integral membrane protein VMA21 homolog (102 aa).

At 1-33 (MTTSSSSEPSTMATLFPNFRDQEVQSAVKNLLT) the chain is on the cytoplasmic side. A helical membrane pass occupies residues 34 to 54 (YSLVILIVPLASMFLLKQFFF). The Lumenal segment spans residues 55–67 (EGLLGVSANDALT). The helical transmembrane segment at 68–88 (YSAIIAVVLVHVVLGIWLFAA) threads the bilayer. Residues 89-102 (TKQEDRKKRENKQD) lie on the Cytoplasmic side of the membrane.

The protein belongs to the VMA21 family.

The protein resides in the endoplasmic reticulum membrane. Its subcellular location is the endoplasmic reticulum-Golgi intermediate compartment membrane. It localises to the cytoplasmic vesicle. It is found in the COPII-coated vesicle membrane. Required for the assembly of the V0 complex of the vacuolar ATPase (V-ATPase) in the endoplasmic reticulum. This Caenorhabditis elegans protein is Vacuolar ATPase assembly integral membrane protein VMA21 homolog.